Consider the following 242-residue polypeptide: Octanoyltransferase (242 aa).

Residues 31-206 (SQTTDEIWFL…LFLKNFGYNQ (176 aa)) enclose the BPL/LPL catalytic domain. Substrate is bound by residues 70 to 77 (RGGQVTYH), 137 to 139 (SIG), and 150 to 152 (GLA). The active-site Acyl-thioester intermediate is cysteine 168.

This sequence belongs to the LipB family.

The protein resides in the cytoplasm. The catalysed reaction is octanoyl-[ACP] + L-lysyl-[protein] = N(6)-octanoyl-L-lysyl-[protein] + holo-[ACP] + H(+). It functions in the pathway protein modification; protein lipoylation via endogenous pathway; protein N(6)-(lipoyl)lysine from octanoyl-[acyl-carrier-protein]: step 1/2. Catalyzes the transfer of endogenously produced octanoic acid from octanoyl-acyl-carrier-protein onto the lipoyl domains of lipoate-dependent enzymes. Lipoyl-ACP can also act as a substrate although octanoyl-ACP is likely to be the physiological substrate. This Coxiella burnetii (strain CbuG_Q212) (Coxiella burnetii (strain Q212)) protein is Octanoyltransferase.